The sequence spans 497 residues: Homeotic protein empty spiracles (497 aa).

Disordered stretches follow at residues 34–117 (NDVS…HLSP), 161–262 (SPLQ…MMMP), and 441–497 (NRRT…DASH). A compositionally biased stretch (polar residues) spans 35–50 (DVSTAGGNSTPDLSGP). Over residues 51 to 68 (QSPPPGERNVPGSPPQTP) the composition is skewed to pro residues. Over residues 96–117 (PHAQQQQQQHLQAPHPHPHLSP) the composition is skewed to low complexity. Polar residues predominate over residues 161–176 (SPLQTRLSPETEQPQM). Low complexity-rich tracts occupy residues 208–239 (PKSV…QQQQ) and 248–262 (PAMM…MMMP). Residues 391–450 (PKRIRTAFSPSQLLKLEHAFESNQYVVGAERKALAQNLNLSETQVKVWFQNRRTKHKRMQ) constitute a DNA-binding region (homeobox). Acidic residues predominate over residues 470 to 497 (GDEDDDELIDMEMDECPSDEEHELDASH).

Belongs to the EMX homeobox family.

The protein localises to the nucleus. In terms of biological role, acts as a homeotic selector gene controlling antennal and mandibular segment identity. The protein is Homeotic protein empty spiracles (ems) of Drosophila melanogaster (Fruit fly).